A 234-amino-acid polypeptide reads, in one-letter code: Ribose-5-phosphate isomerase A (234 aa).

Substrate-binding positions include 39–42, 92–95, and 105–108; these read TGST, DGAD, and KGGG. The active-site Proton acceptor is E114. K132 is a binding site for substrate.

It belongs to the ribose 5-phosphate isomerase family. As to quaternary structure, homodimer.

It carries out the reaction aldehydo-D-ribose 5-phosphate = D-ribulose 5-phosphate. It functions in the pathway carbohydrate degradation; pentose phosphate pathway; D-ribose 5-phosphate from D-ribulose 5-phosphate (non-oxidative stage): step 1/1. Its function is as follows. Catalyzes the reversible conversion of ribose-5-phosphate to ribulose 5-phosphate. The protein is Ribose-5-phosphate isomerase A of Albidiferax ferrireducens (strain ATCC BAA-621 / DSM 15236 / T118) (Rhodoferax ferrireducens).